The following is a 406-amino-acid chain: Cysteine desulfurase (406 aa).

Lys226 is modified (N6-(pyridoxal phosphate)lysine). Cys364 acts as the Cysteine persulfide intermediate in catalysis.

Belongs to the class-V pyridoxal-phosphate-dependent aminotransferase family. Csd subfamily. Homodimer. Interacts with SufE and the SufBCD complex composed of SufB, SufC and SufD. The interaction with SufE is required to mediate the direct transfer of the sulfur atom from the S-sulfanylcysteine. Pyridoxal 5'-phosphate serves as cofactor.

It is found in the cytoplasm. The catalysed reaction is (sulfur carrier)-H + L-cysteine = (sulfur carrier)-SH + L-alanine. It catalyses the reaction L-selenocysteine + AH2 = hydrogenselenide + L-alanine + A + H(+). It participates in cofactor biosynthesis; iron-sulfur cluster biosynthesis. Its function is as follows. Cysteine desulfurases mobilize the sulfur from L-cysteine to yield L-alanine, an essential step in sulfur metabolism for biosynthesis of a variety of sulfur-containing biomolecules. Component of the suf operon, which is activated and required under specific conditions such as oxidative stress and iron limitation. Acts as a potent selenocysteine lyase in vitro, that mobilizes selenium from L-selenocysteine. Selenocysteine lyase activity is however unsure in vivo. The protein is Cysteine desulfurase of Escherichia coli O9:H4 (strain HS).